We begin with the raw amino-acid sequence, 1031 residues long: Telomerase reverse transcriptase (1031 aa).

Residues 498 to 852 (KEVEEWKKSL…DYCDWIGISI (355 aa)) form the Reverse transcriptase domain. Mg(2+) contacts are provided by Asp603, Asp781, and Asp782.

Belongs to the reverse transcriptase family. Telomerase subfamily. In terms of assembly, component of the telomerase holoenzyme complex composed minimally of the catalytic subunit p123 and the telomerase RNA template component.

It localises to the nucleus. It is found in the chromosome. Its subcellular location is the telomere. It carries out the reaction DNA(n) + a 2'-deoxyribonucleoside 5'-triphosphate = DNA(n+1) + diphosphate. Its function is as follows. Telomerase is a ribonucleoprotein enzyme essential for the replication of chromosome termini in most eukaryotes. It elongates telomeres. It is a reverse transcriptase that adds simple sequence repeats to chromosome ends by copying a template sequence within the RNA component of the enzyme. The sequence is that of Telomerase reverse transcriptase from Euplotes aediculatus (Ciliate).